A 512-amino-acid polypeptide reads, in one-letter code: Colistin resistance protein EmrB (512 aa).

The next 14 membrane-spanning stretches (helical) occupy residues 17 to 37 (WAIF…IQIV), 55 to 75 (VTWV…MSSI), 84 to 104 (VYYT…ALSW), 115 to 135 (IQGF…YLLF), 144 to 164 (LVMF…IGGW), 169 to 189 (FSWH…ATVI), 205 to 225 (SMDW…EYFL), 234 to 254 (LADT…MIFF), 280 to 300 (ITTF…PVFL), 314 to 334 (VMMV…WLIP), 341 to 361 (TVFV…HLSI), 376 to 396 (GIGL…TLPL), 412 to 432 (IGGA…TAMH), and 486 to 506 (FNDL…LTIF).

The protein belongs to the major facilitator superfamily. EmrB family.

The protein localises to the cell inner membrane. Probably part of an efflux pump system that contributes to adaptation to osmotic stress and resistance to colistin. The polypeptide is Colistin resistance protein EmrB (Acinetobacter baumannii (strain ATCC 17978 / DSM 105126 / CIP 53.77 / LMG 1025 / NCDC KC755 / 5377)).